We begin with the raw amino-acid sequence, 233 residues long: Octanoyltransferase (233 aa).

The region spanning 32 to 213 (NNIDGILLLL…NFKMIFETDL (182 aa)) is the BPL/LPL catalytic domain. Substrate-binding positions include 77-84 (RGGNVTYH), 144-146 (AIG), and 157-159 (GFA). Catalysis depends on cysteine 175, which acts as the Acyl-thioester intermediate.

Belongs to the LipB family.

The protein localises to the cytoplasm. It catalyses the reaction octanoyl-[ACP] + L-lysyl-[protein] = N(6)-octanoyl-L-lysyl-[protein] + holo-[ACP] + H(+). It participates in protein modification; protein lipoylation via endogenous pathway; protein N(6)-(lipoyl)lysine from octanoyl-[acyl-carrier-protein]: step 1/2. Functionally, catalyzes the transfer of endogenously produced octanoic acid from octanoyl-acyl-carrier-protein onto the lipoyl domains of lipoate-dependent enzymes. Lipoyl-ACP can also act as a substrate although octanoyl-ACP is likely to be the physiological substrate. The chain is Octanoyltransferase from Clostridium kluyveri (strain ATCC 8527 / DSM 555 / NBRC 12016 / NCIMB 10680 / K1).